Reading from the N-terminus, the 79-residue chain is uncharacterized protein (79 aa).

A coiled-coil region spans residues 4 to 43 (QENEDLRKQLVEASELLKSQAKELKDAHQQQKLALQDFLE).

This is an uncharacterized protein from Homo sapiens (Human).